The chain runs to 234 residues: MHQLVLLRHGESVWNKENLFTGWTDVELSPSGEEESRKAGLLLKEHGFVFDMAFTSLLKRAIKTLWIVLEQMDLMWIPERKEWRLNERHYGALQGLNKAQTAEQYGDEQVKLWRRSYKVRPPALAEGDRRHPSFDPRYHSLQGELLPSTECLQDTVERVLPFWRQQAVPALRQGKRILIAAHGNSLRGLIKYLDQVSDEDIVGLEIPTGSPLVYELDSDLKPMRHYYLETGKTG.

Substrate contacts are provided by residues 8–15, 21–22, arginine 60, 87–90, lysine 98, 114–115, and 183–184; these read RHGESVWN, TG, ERHY, RR, and GN. The active-site Tele-phosphohistidine intermediate is the histidine 9. The active-site Proton donor/acceptor is the glutamate 87.

The protein belongs to the phosphoglycerate mutase family. BPG-dependent PGAM subfamily. In terms of assembly, homodimer.

It carries out the reaction (2R)-2-phosphoglycerate = (2R)-3-phosphoglycerate. The protein operates within carbohydrate degradation; glycolysis; pyruvate from D-glyceraldehyde 3-phosphate: step 3/5. Its function is as follows. Catalyzes the interconversion of 2-phosphoglycerate and 3-phosphoglycerate. In Geobacter sp. (strain M21), this protein is 2,3-bisphosphoglycerate-dependent phosphoglycerate mutase.